The primary structure comprises 629 residues: Smc-like protein Sph1 (629 aa).

Coiled coils occupy residues 139–282 (LETE…LLDD) and 318–487 (AETT…NQFD).

This sequence belongs to the Sph1/Sph2 family.

The protein localises to the cytoplasm. In terms of biological role, may play a role in a late step of replication. In Halobacterium salinarum (Halobacterium halobium), this protein is Smc-like protein Sph1 (sph1).